Here is a 49-residue protein sequence, read N- to C-terminus: Large ribosomal subunit protein bL33A (49 aa).

The protein belongs to the bacterial ribosomal protein bL33 family.

The chain is Large ribosomal subunit protein bL33A from Levilactobacillus brevis (strain ATCC 367 / BCRC 12310 / CIP 105137 / JCM 1170 / LMG 11437 / NCIMB 947 / NCTC 947) (Lactobacillus brevis).